The chain runs to 263 residues: 4-hydroxy-tetrahydrodipicolinate reductase (263 aa).

NAD(+) is bound by residues 8–13 (GACGRM), Asp-34, 99–101 (GTT), and 125–128 (SPNY). The active-site Proton donor/acceptor is the His-157. His-158 contacts (S)-2,3,4,5-tetrahydrodipicolinate. The Proton donor role is filled by Lys-161. Residue 167–168 (GT) participates in (S)-2,3,4,5-tetrahydrodipicolinate binding.

It belongs to the DapB family.

It localises to the cytoplasm. The catalysed reaction is (S)-2,3,4,5-tetrahydrodipicolinate + NAD(+) + H2O = (2S,4S)-4-hydroxy-2,3,4,5-tetrahydrodipicolinate + NADH + H(+). The enzyme catalyses (S)-2,3,4,5-tetrahydrodipicolinate + NADP(+) + H2O = (2S,4S)-4-hydroxy-2,3,4,5-tetrahydrodipicolinate + NADPH + H(+). It participates in amino-acid biosynthesis; L-lysine biosynthesis via DAP pathway; (S)-tetrahydrodipicolinate from L-aspartate: step 4/4. Functionally, catalyzes the conversion of 4-hydroxy-tetrahydrodipicolinate (HTPA) to tetrahydrodipicolinate. The protein is 4-hydroxy-tetrahydrodipicolinate reductase of Methanosarcina mazei (strain ATCC BAA-159 / DSM 3647 / Goe1 / Go1 / JCM 11833 / OCM 88) (Methanosarcina frisia).